A 503-amino-acid polypeptide reads, in one-letter code: Anaerobic nitric oxide reductase flavorubredoxin (503 aa).

The zinc metallo-hydrolase stretch occupies residues 30–210 (LQGSSYNSYL…PFSRLVTAKI (181 aa)). Residues His79, Glu81, Asp83, His147, Asp166, and His227 each contribute to the Fe cation site. The Flavodoxin-like domain maps to 254 to 393 (ITLFYDTMSN…ICREHGREIA (140 aa)). FMN is bound by residues 260-264 (TMSNN) and 342-369 (AFGSYGWNGGAVDRIQTRLMDAGFETTL). The 52-residue stretch at 451-502 (NGCMQCSVCQWIYDPALGEPMQDVTPGTMWSDVPDSFLCPECGLGKDVFNPI) folds into the Rubredoxin-like domain. Fe cation is bound by residues Cys456, Cys459, Cys489, and Cys492.

In the N-terminal section; belongs to the zinc metallo-hydrolase group 3 family. As to quaternary structure, homotetramer. The cofactor is Fe cation. FMN is required as a cofactor.

It localises to the cytoplasm. It participates in nitrogen metabolism; nitric oxide reduction. Its function is as follows. Anaerobic nitric oxide reductase; uses NADH to detoxify nitric oxide (NO), protecting several 4Fe-4S NO-sensitive enzymes. Has at least 2 reductase partners, only one of which (NorW, flavorubredoxin reductase) has been identified. NO probably binds to the di-iron center; electrons enter from the NorW at rubredoxin and are transferred sequentially to the FMN center and the di-iron center. Also able to function as an aerobic oxygen reductase. In Pectobacterium carotovorum subsp. carotovorum (strain PC1), this protein is Anaerobic nitric oxide reductase flavorubredoxin.